A 228-amino-acid polypeptide reads, in one-letter code: MKNLIQFMTRVPIKGDFEKAREEVWMLPLLTPLTAFIPSLILYLNIPLKNVLSILSLYWVIGLLHLDGLADWADGIMVKGDREKKVRAMKDVNTGIAGTFAVVMILLIQVYSLFSAPFYSIYLAELNSKMAMLLALATKKPLGEGLGKYFMDKLTTKRVFLGGVLYALLLIPILLYDPQSIFALLGLVGGIYAVKISLDNFGGLNGDCIGAVGEITRGATLLILGVWA.

Helical transmembrane passes span 24–44 (VWMLPLLTPLTAFIPSLILYL), 50–70 (NVLSILSLYWVIGLLHLDGLA), 96–116 (IAGTFAVVMILLIQVYSLFSA), 117–137 (PFYSIYLAELNSKMAMLLALA), 159–176 (VFLGGVLYALLLIPILLY), and 181–198 (IFALLGLVGGIYAVKISL).

The protein belongs to the CobS family. Mg(2+) is required as a cofactor.

The protein localises to the cell membrane. It carries out the reaction alpha-ribazole + adenosylcob(III)inamide-GDP = adenosylcob(III)alamin + GMP + H(+). The enzyme catalyses alpha-ribazole 5'-phosphate + adenosylcob(III)inamide-GDP = adenosylcob(III)alamin 5'-phosphate + GMP + H(+). Its pathway is cofactor biosynthesis; adenosylcobalamin biosynthesis; adenosylcobalamin from cob(II)yrinate a,c-diamide: step 7/7. Functionally, joins adenosylcobinamide-GDP and alpha-ribazole to generate adenosylcobalamin (Ado-cobalamin). Also synthesizes adenosylcobalamin 5'-phosphate from adenosylcobinamide-GDP and alpha-ribazole 5'-phosphate. The protein is Adenosylcobinamide-GDP ribazoletransferase of Pyrococcus furiosus (strain ATCC 43587 / DSM 3638 / JCM 8422 / Vc1).